The following is a 224-amino-acid chain: Adenylate kinase (224 aa).

10–15 (GSGKST) provides a ligand contact to ATP. The interval 30–59 (SSGDMIRAEIEKGSELGKELKKYLAKGELI) is NMP. AMP-binding positions include S31, R36, 57-59 (ELI), 83-86 (GYPR), and Q90. The segment at 124–161 (GRRICPKCGAVYHLRYRPPKVPGKCDLCGSQLIQREDD) is LID. R125 serves as a coordination point for ATP. C128 and C131 together coordinate Zn(2+). 134–135 (VY) contacts ATP. Zn(2+) contacts are provided by C148 and C151. AMP-binding residues include R158 and R169. G197 contacts ATP.

The protein belongs to the adenylate kinase family. In terms of assembly, monomer.

Its subcellular location is the cytoplasm. It carries out the reaction AMP + ATP = 2 ADP. It functions in the pathway purine metabolism; AMP biosynthesis via salvage pathway; AMP from ADP: step 1/1. In terms of biological role, catalyzes the reversible transfer of the terminal phosphate group between ATP and AMP. Plays an important role in cellular energy homeostasis and in adenine nucleotide metabolism. The sequence is that of Adenylate kinase from Thermococcus onnurineus (strain NA1).